We begin with the raw amino-acid sequence, 177 residues long: Large ribosomal subunit protein uL6 (177 aa).

This sequence belongs to the universal ribosomal protein uL6 family. In terms of assembly, part of the 50S ribosomal subunit.

This protein binds to the 23S rRNA, and is important in its secondary structure. It is located near the subunit interface in the base of the L7/L12 stalk, and near the tRNA binding site of the peptidyltransferase center. This Dinoroseobacter shibae (strain DSM 16493 / NCIMB 14021 / DFL 12) protein is Large ribosomal subunit protein uL6.